Consider the following 74-residue polypeptide: Conotoxin Vt11.7 (74 aa).

The N-terminal stretch at 1–26 is a signal peptide; it reads MMFRLTSVGCFLLVIVLLNVAVLTNA. 4 cysteine pairs are disulfide-bonded: C28–C42, C35–C47, C41–C51, and C46–C55. Residues 62 to 74 constitute a propeptide that is removed on maturation; that stretch reads AHGHGLLRFWGQR.

This sequence belongs to the conotoxin I2 superfamily. Expressed by the venom duct.

It is found in the secreted. This is Conotoxin Vt11.7 from Conus planorbis (Planorbis cone).